Reading from the N-terminus, the 270-residue chain is tRNA pseudouridine synthase A (270 aa).

Aspartate 51 (nucleophile) is an active-site residue. Position 109 (tyrosine 109) interacts with substrate.

The protein belongs to the tRNA pseudouridine synthase TruA family. As to quaternary structure, homodimer.

It catalyses the reaction uridine(38/39/40) in tRNA = pseudouridine(38/39/40) in tRNA. Its function is as follows. Formation of pseudouridine at positions 38, 39 and 40 in the anticodon stem and loop of transfer RNAs. The polypeptide is tRNA pseudouridine synthase A (Burkholderia multivorans (strain ATCC 17616 / 249)).